Consider the following 151-residue polypeptide: Putative pre-16S rRNA nuclease (151 aa).

It belongs to the YqgF nuclease family.

It is found in the cytoplasm. Its function is as follows. Could be a nuclease involved in processing of the 5'-end of pre-16S rRNA. This Prochlorococcus marinus subsp. pastoris (strain CCMP1986 / NIES-2087 / MED4) protein is Putative pre-16S rRNA nuclease.